The following is a 376-amino-acid chain: MSSVSGVRTPRERRSALRSLLRKRRQRELASKVASTVNGATSANNHGEPPSPADARPRLTLHDLHDIFREHPELELKYLNMMKMAITGKESICLPFNFHSHRQHTCLDISPYGNEQVSRIACTSCEDNRILPTASDAMVAFINQTSNIMKNRNFYYGFCKSSELLKLSTNQPPIFQIYYLLHAANHDIVPFMHAEDGRLHMHVIFENPDVHIPCDCITQMLTAAREDYSVTLNIVRDHVVISVLCHAVSASSVKIDVTILQRKIDEMDIPNDVSESFERYKELIQELCQSSGNNLYEEATSSYAIRSPLTASPLHVVSTNGCGPSSSSQSTPPHLHPPSQATQPHHYSHHQSQSQQHHHRPQSPPPPLFLNSIRAP.

Ser19 is subject to Phosphoserine. The interval 22 to 57 is disordered; sequence RKRRQRELASKVASTVNGATSANNHGEPPSPADARP. Polar residues predominate over residues 33 to 45; sequence VASTVNGATSANN. The CCCH-type zinc finger occupies 106–211; the sequence is CLDISPYGNE…HVIFENPDVH (106 aa). Residues 316-376 form a disordered region; that stretch reads VVSTNGCGPS…PLFLNSIRAP (61 aa). Residues 317–332 are compositionally biased toward polar residues; it reads VSTNGCGPSSSSQSTP.

The protein belongs to the herpesviridae NEC1 protein family. Forms a heterohexameric complex with NEC2. Interacts with capsid vertex specific component 2/CVC2; this interaction directs the capsid to the host inner nuclear membrane to initiate budding. Phosphorylated at serine residues in the N-terminus. This phosphorylation regulates the localization within the inner nuclear membrane. Phosphorylation by viral kinase UL97 at Ser-19 plays an important role for correct viral nuclear egress complex (NEC) localization.

It localises to the host nucleus inner membrane. Its function is as follows. Plays an essential role in virion nuclear egress, the first step of virion release from infected cell. Within the host nucleus, NEC1 interacts with the newly formed capsid through the vertexes and directs it to the inner nuclear membrane by associating with NEC2. Induces the budding of the capsid at the inner nuclear membrane as well as its envelopment into the perinuclear space. There, the NEC1/NEC2 complex promotes the fusion of the enveloped capsid with the outer nuclear membrane and the subsequent release of the viral capsid into the cytoplasm where it will reach the secondary budding sites in the host Golgi or trans-Golgi network. This chain is Nuclear egress protein 1, found in Homo sapiens (Human).